The sequence spans 161 residues: UPF0225 protein NTHI0386 (161 aa).

Belongs to the UPF0225 family.

The chain is UPF0225 protein NTHI0386 from Haemophilus influenzae (strain 86-028NP).